A 1018-amino-acid polypeptide reads, in one-letter code: 2-oxoglutarate dehydrogenase-like, mitochondrial (1018 aa).

The Ca(2+) site is built by His-138, Asp-151, and Asp-153. Thiamine diphosphate is bound by residues Arg-307, Asp-406, Asn-439, Ile-441, and Gln-671. Residues Asp-406, Asn-439, and Ile-441 each coordinate Mg(2+).

It belongs to the alpha-ketoglutarate dehydrogenase family. In terms of assembly, the OGDHC complex comprises multiple copies of three catalytic enzyme components, the 2-oxoglutarate dehydrogenase (OGDH/E1), the dihydrolipoamide dehydrogenase (DLST/E2) and the dihydrolipoamide dehydrogenase (DLD/E3). OGDHL/E1-like isoenzyme may replace OGDH in the OGDHC complex in the brain. It depends on thiamine diphosphate as a cofactor. Mg(2+) is required as a cofactor.

The protein resides in the mitochondrion matrix. It carries out the reaction N(6)-[(R)-lipoyl]-L-lysyl-[protein] + 2-oxoglutarate + H(+) = N(6)-[(R)-S(8)-succinyldihydrolipoyl]-L-lysyl-[protein] + CO2. Its function is as follows. 2-oxoglutarate dehydrogenase (E1-like) component of the 2-oxoglutarate dehydrogenase multienzyme complex (OGDHC) which mediates the decarboxylation of alpha-ketoglutarate in the tricarboxylic acid cycle. The OGDHC complex catalyzes the overall conversion of 2-oxoglutarate to succinyl-CoA and CO(2) while reducing NAD(+) to NADH. The OGDHC complex is mainly active in the mitochondrion. Involved in the inhibition of cell proliferation and in apoptosis. The chain is 2-oxoglutarate dehydrogenase-like, mitochondrial (ogdhl) from Xenopus laevis (African clawed frog).